Consider the following 311-residue polypeptide: Methionyl-tRNA formyltransferase (311 aa).

Residue Ser-110–Pro-113 participates in (6S)-5,6,7,8-tetrahydrofolate binding.

It belongs to the Fmt family.

The enzyme catalyses L-methionyl-tRNA(fMet) + (6R)-10-formyltetrahydrofolate = N-formyl-L-methionyl-tRNA(fMet) + (6S)-5,6,7,8-tetrahydrofolate + H(+). Functionally, attaches a formyl group to the free amino group of methionyl-tRNA(fMet). The formyl group appears to play a dual role in the initiator identity of N-formylmethionyl-tRNA by promoting its recognition by IF2 and preventing the misappropriation of this tRNA by the elongation apparatus. The protein is Methionyl-tRNA formyltransferase of Streptococcus pyogenes serotype M2 (strain MGAS10270).